The primary structure comprises 572 residues: Urease subunit alpha (572 aa).

A Urease domain is found at 136 to 572 (GGIDTHIHFI…VPLGQRYFLF (437 aa)). Ni(2+)-binding residues include H141, H143, and K224. The residue at position 224 (K224) is an N6-carboxylysine. Residue H226 participates in substrate binding. Ni(2+) contacts are provided by H253 and H279. The active-site Proton donor is the H327. D367 is a binding site for Ni(2+).

The protein belongs to the metallo-dependent hydrolases superfamily. Urease alpha subunit family. In terms of assembly, heterotrimer of UreA (gamma), UreB (beta) and UreC (alpha) subunits. Three heterotrimers associate to form the active enzyme. Requires Ni cation as cofactor. Carboxylation allows a single lysine to coordinate two nickel ions.

It localises to the cytoplasm. It catalyses the reaction urea + 2 H2O + H(+) = hydrogencarbonate + 2 NH4(+). The protein operates within nitrogen metabolism; urea degradation; CO(2) and NH(3) from urea (urease route): step 1/1. The polypeptide is Urease subunit alpha (Haemophilus influenzae (strain ATCC 51907 / DSM 11121 / KW20 / Rd)).